The following is a 519-amino-acid chain: Probable WRKY transcription factor 33 (519 aa).

Disordered stretches follow at residues 1–34 (MAAS…STSS) and 123–212 (SSGV…CTFP). Polar residues predominate over residues 7–34 (TMDNSRTRQNMNGSANWSQQSGRTSTSS). Residues 130–142 (TTTTTTTTTTTTT) are compositionally biased toward low complexity. A compositionally biased stretch (polar residues) spans 164–174 (TETRPNNQAVS). Residues 178-188 (REQRKGEDGYN) are compositionally biased toward basic and acidic residues. The WRKY 1 DNA-binding region spans 178-242 (REQRKGEDGY…YKGSHNHPKP (65 aa)). Zn(2+)-binding residues include C209, C214, H237, and H239. Disordered regions lie at residues 232–255 (VYKG…SSTF) and 267–349 (NRQA…REPR). The segment covering 245-254 (TRRSSSSSST) has biased composition (low complexity). The span at 269–299 (QASSDQPNSNNSFHQSDSFGMQQEDNTTSDS) shows a compositional bias: polar residues. A compositionally biased stretch (basic and acidic residues) spans 323 to 332 (PEAKRWKGDN). A DNA-binding region (WRKY 2) is located at residues 356 to 421 (SDIDILDDGY…YEGKHNHDVP (66 aa)). Zn(2+) is bound by residues C387, C392, H416, and H418.

Belongs to the WRKY group I family. Interacts with MKS1. Interacts with ATG18A. Interacts with SIB1 and SIB2. Interacts with VQ1 and VQ10. In terms of processing, phosphorylated by MPK4. Phosphorylated on serine residues by MPK3 and MPK6 following infection with the necrotrophic fungal pathogen B.cinerea. Highly expressed in roots, leaves and flowers, and at lower levels in stems, siliques and seeds.

The protein resides in the nucleus. In terms of biological role, transcription factor. Interacts specifically with the W box (5'-TTGAC[CT]-3'), a frequently occurring elicitor-responsive cis-acting element. Involved in defense responses. Required for resistance to the necrotrophic fungal pathogen B.cinerea. Regulates the antagonistic relationship between defense pathways mediating responses to the bacterial pathogen P. syringae and the necrotrophic pathogen B.cinerea. Required for the phytoalexin camalexin synthesis following infection with B.cinerea. Acts as a positive regulator of the camalexin biosynthetic genes PAD3 (CYP71B15) and CYP71A13 by binding to their promoters. Acts downstream of MPK3 and MPK6 in reprogramming the expression of camalexin biosynthetic genes, which drives the metabolic flow to camalexin production. Functions with WRKY25 as positive regulator of salt stress response and abscisic acid (ABA) signaling. Functions with WRKY25 and WRKY26 as positive regulator of plant thermotolerance by partially participating in ethylene-response signal transduction pathway. The DNA-binding activity of WRKY33 is increased by SIB1 and SIB2. In Arabidopsis thaliana (Mouse-ear cress), this protein is Probable WRKY transcription factor 33 (WRKY33).